The sequence spans 310 residues: NAD kinase 1 (310 aa).

The Proton acceptor role is filled by Asp68. Residues 68 to 69 (DG), 145 to 146 (NE), Arg156, His175, and Asp177 each bind NAD(+).

The protein belongs to the NAD kinase family. A divalent metal cation is required as a cofactor.

The protein localises to the cytoplasm. The catalysed reaction is NAD(+) + ATP = ADP + NADP(+) + H(+). Involved in the regulation of the intracellular balance of NAD and NADP, and is a key enzyme in the biosynthesis of NADP. Catalyzes specifically the phosphorylation on 2'-hydroxyl of the adenosine moiety of NAD to yield NADP. The polypeptide is NAD kinase 1 (Gloeobacter violaceus (strain ATCC 29082 / PCC 7421)).